The chain runs to 262 residues: Indole-3-glycerol phosphate synthase (262 aa).

Belongs to the TrpC family.

The enzyme catalyses 1-(2-carboxyphenylamino)-1-deoxy-D-ribulose 5-phosphate + H(+) = (1S,2R)-1-C-(indol-3-yl)glycerol 3-phosphate + CO2 + H2O. The protein operates within amino-acid biosynthesis; L-tryptophan biosynthesis; L-tryptophan from chorismate: step 4/5. The chain is Indole-3-glycerol phosphate synthase from Nitratiruptor sp. (strain SB155-2).